Reading from the N-terminus, the 387-residue chain is Phosphoglycerate kinase (387 aa).

Substrate-binding positions include 21–23, R36, 59–62, R113, and R146; these read DLN and HLGR. ATP is bound by residues K197, E314, and 340 to 343; that span reads GGDT.

Belongs to the phosphoglycerate kinase family. In terms of assembly, monomer.

It is found in the cytoplasm. It carries out the reaction (2R)-3-phosphoglycerate + ATP = (2R)-3-phospho-glyceroyl phosphate + ADP. It participates in carbohydrate degradation; glycolysis; pyruvate from D-glyceraldehyde 3-phosphate: step 2/5. The sequence is that of Phosphoglycerate kinase from Pectobacterium atrosepticum (strain SCRI 1043 / ATCC BAA-672) (Erwinia carotovora subsp. atroseptica).